Consider the following 263-residue polypeptide: 3-methyl-2-oxobutanoate hydroxymethyltransferase (263 aa).

Positions 45 and 84 each coordinate Mg(2+). Residues 45–46 (DS), D84, and K113 contribute to the 3-methyl-2-oxobutanoate site. E115 provides a ligand contact to Mg(2+). Residue E182 is the Proton acceptor of the active site.

This sequence belongs to the PanB family. In terms of assembly, homodecamer; pentamer of dimers. Requires Mg(2+) as cofactor.

The protein localises to the cytoplasm. It carries out the reaction 3-methyl-2-oxobutanoate + (6R)-5,10-methylene-5,6,7,8-tetrahydrofolate + H2O = 2-dehydropantoate + (6S)-5,6,7,8-tetrahydrofolate. It participates in cofactor biosynthesis; coenzyme A biosynthesis. Functionally, catalyzes the reversible reaction in which hydroxymethyl group from 5,10-methylenetetrahydrofolate is transferred onto alpha-ketoisovalerate to form ketopantoate. The sequence is that of 3-methyl-2-oxobutanoate hydroxymethyltransferase from Ignicoccus hospitalis (strain KIN4/I / DSM 18386 / JCM 14125).